The sequence spans 487 residues: NADH-quinone oxidoreductase subunit N (487 aa).

14 consecutive transmembrane segments (helical) span residues 8-28 (LLALLPLLLTTGAMVALMLAI), 37-57 (AFVVTIAGLNLALFSLPIVMA), 71-91 (GYAVFYMGLVLIGALATCTFG), 104-124 (EFYLLLLIATAGGLVLAGSRH), 125-145 (LASLFIGIEMLTLPMFGLVGY), 159-179 (YMVLSAAATAFLLFGMALLYA), 203-223 (LMGGLGLMLVGFAFKLSLAPF), 235-255 (PAPVATFLATVSKIAVFCVLL), 269-289 (IHWLLAAMAVISIVIGNLLAL), 303-323 (ISHFGYLLAVIVASRLGQMPV), 327-347 (GVYLLMYLFTSLGAFGVISMM), 374-394 (AVLTVMMLSLAGIPMTLGFIG), 408-427 (WWLSGAIVLGSALGLYYYLR), and 449-469 (AITSGGLVVLLSAALVVALGL).

It belongs to the complex I subunit 2 family. NDH-1 is composed of 14 different subunits. Subunits NuoA, H, J, K, L, M, N constitute the membrane sector of the complex.

It localises to the cell inner membrane. The catalysed reaction is a quinone + NADH + 5 H(+)(in) = a quinol + NAD(+) + 4 H(+)(out). NDH-1 shuttles electrons from NADH, via FMN and iron-sulfur (Fe-S) centers, to quinones in the respiratory chain. The immediate electron acceptor for the enzyme in this species is believed to be ubiquinone. Couples the redox reaction to proton translocation (for every two electrons transferred, four hydrogen ions are translocated across the cytoplasmic membrane), and thus conserves the redox energy in a proton gradient. This is NADH-quinone oxidoreductase subunit N from Aeromonas hydrophila subsp. hydrophila (strain ATCC 7966 / DSM 30187 / BCRC 13018 / CCUG 14551 / JCM 1027 / KCTC 2358 / NCIMB 9240 / NCTC 8049).